The chain runs to 331 residues: Cytosolic 5'-nucleotidase 3A (331 aa).

The Nucleophile role is filled by Asp83. Asp83 and Asp85 together coordinate Mg(2+). The Proton donor role is filled by Asp85. Residue Glu130 participates in CMP binding. Residues Glu130 and Ser151 each coordinate N(7)-methyl-GMP. Residues 198 to 200 and Lys247 contribute to the substrate site; that span reads SAG. A Mg(2+)-binding site is contributed by Asp272. Ser273 is subject to Phosphoserine.

Belongs to the pyrimidine 5'-nucleotidase family. In terms of assembly, monomer. Isoform 2 is highly expressed in the brain, heart, spleen, kidney and blood. Isoform 2 is expressed (at protein level) in the spleen, skeletal muscle and gastrointestinal epithelia.

It is found in the cytoplasm. The enzyme catalyses N(7)-methyl-GMP + H2O = N(7)-methylguanosine + phosphate. It catalyses the reaction a ribonucleoside 5'-phosphate + H2O = a ribonucleoside + phosphate. Its function is as follows. Nucleotidase which shows specific activity towards cytidine monophosphate (CMP) and 7-methylguanosine monophosphate (m(7)GMP). CMP seems to be the preferred substrate. The polypeptide is Cytosolic 5'-nucleotidase 3A (Nt5c3a) (Mus musculus (Mouse)).